The primary structure comprises 1240 residues: DNA polymerase catalytic subunit (1240 aa).

Residues M1–G22 are compositionally biased toward low complexity. 3 disordered regions span residues M1 to N44, G646 to G695, and A1103 to P1139. Positions N669–E688 are enriched in acidic residues.

Belongs to the DNA polymerase type-B family. In terms of assembly, forms a complex with the ssDNA-binding protein UL29, the DNA polymerase processivity factor, and the alkaline exonuclease. Interacts with the putative helicase-primase complex subunit UL8; this interaction may coordinate leading and lagging strand DNA synthesis at the replication fork.

The protein resides in the host nucleus. It catalyses the reaction DNA(n) + a 2'-deoxyribonucleoside 5'-triphosphate = DNA(n+1) + diphosphate. The enzyme catalyses Endonucleolytic cleavage to 5'-phosphomonoester.. In terms of biological role, replicates viral genomic DNA. The replication complex is composed of six viral proteins: the DNA polymerase, processivity factor, primase, primase-associated factor, helicase, and ssDNA-binding protein. Additionally, the polymerase contains an intrinsic ribonuclease H (RNase H) activity that specifically degrades RNA/DNA heteroduplexes or duplex DNA substrates in the 5' to 3' direction. Therefore, it can catalyze the excision of the RNA primers that initiate the synthesis of Okazaki fragments at a replication fork during viral DNA replication. The polypeptide is DNA polymerase catalytic subunit (Human herpesvirus 2 (strain HG52) (HHV-2)).